The chain runs to 326 residues: Phospho-N-acetylmuramoyl-pentapeptide-transferase (326 aa).

9 consecutive transmembrane segments (helical) span residues 3-23, 51-71, 79-99, 115-135, 138-158, 169-189, 195-215, 221-243, and 304-324; these read ISIS…PAFI, TMGG…VALF, VGMI…DDFL, LALQ…GGDM, IFGY…FWLV, GIDG…GVIA, MDIL…FVFN, VFMG…MALH, and VDFF…AILY.

This sequence belongs to the glycosyltransferase 4 family. MraY subfamily. Mg(2+) serves as cofactor.

Its subcellular location is the cell membrane. The catalysed reaction is UDP-N-acetyl-alpha-D-muramoyl-L-alanyl-gamma-D-glutamyl-L-lysyl-D-alanyl-D-alanine + di-trans,octa-cis-undecaprenyl phosphate = Mur2Ac(oyl-L-Ala-gamma-D-Glu-L-Lys-D-Ala-D-Ala)-di-trans,octa-cis-undecaprenyl diphosphate + UMP. It participates in cell wall biogenesis; peptidoglycan biosynthesis. Functionally, catalyzes the initial step of the lipid cycle reactions in the biosynthesis of the cell wall peptidoglycan: transfers peptidoglycan precursor phospho-MurNAc-pentapeptide from UDP-MurNAc-pentapeptide onto the lipid carrier undecaprenyl phosphate, yielding undecaprenyl-pyrophosphoryl-MurNAc-pentapeptide, known as lipid I. In Streptococcus pneumoniae (strain Hungary19A-6), this protein is Phospho-N-acetylmuramoyl-pentapeptide-transferase.